The following is a 283-amino-acid chain: Plasma membrane ascorbate-dependent reductase CYBRD1 (283 aa).

The Cytoplasmic portion of the chain corresponds to 1-5 (MEGYK). A helical membrane pass occupies residues 6–30 (SFLAFLVSSLLLGFLGVIFTLVWVL). Residues 13 to 218 (SSLLLGFLGV…FGGLVVWMVT (206 aa)) enclose the Cytochrome b561 domain. The Extracellular portion of the chain corresponds to 31 to 45 (HWREGLGWDGGAAEF). A helical transmembrane segment spans residues 46–67 (NWHPVLVTSGFIFIQGIAIIVY). Positions 48, 68, and 77 each coordinate heme b. At 68-76 (RLPWTWKCS) the chain is on the cytoplasmic side. Lys77 and Lys81 together coordinate L-ascorbate. A helical transmembrane segment spans residues 77-103 (KLLMKFIHAGLHLTALIFTIVALVAVF). Residue His84 participates in heme b binding. Topologically, residues 104–116 (DFHNAKNIPNMYS) are extracellular. Residue His106 coordinates Fe(3+). Heme b contacts are provided by residues 113–116 (NMYS) and His118. A helical membrane pass occupies residues 117 to 142 (LHSWIGLTVVILYALQLVLGVSIYLL). The Cytoplasmic segment spans residues 143 to 149 (PFASNTL). Position 150 (Arg150) interacts with L-ascorbate. A helical membrane pass occupies residues 150 to 177 (RAALMPVHVYSGLFIFGTVIATALMGIT). The heme b site is built by His157 and Glu178. Over 178–195 (EKLIFSLKEPPYSKLPPE) the chain is Extracellular. The helical transmembrane segment at 196–220 (AIFVNTFGLLILVFGGLVVWMVTTP) threads the bilayer. At 221–283 (AWKRPREQGM…LDEAGQRSTM (63 aa)) the chain is on the cytoplasmic side. Lys223 serves as a coordination point for heme b. Residues 234–262 (SPTVSSPDETEEGSTITDCSNTEKSDVEL) form a disordered region. The segment covering 235-253 (PTVSSPDETEEGSTITDCS) has biased composition (polar residues).

As to quaternary structure, homodimer. Heme b serves as cofactor.

The protein localises to the cell membrane. It localises to the apical cell membrane. It carries out the reaction Fe(3+)(out) + L-ascorbate(in) = monodehydro-L-ascorbate radical(in) + Fe(2+)(out) + H(+). The enzyme catalyses Cu(2+)(out) + L-ascorbate(in) = Cu(+)(out) + monodehydro-L-ascorbate radical(in) + H(+). It catalyses the reaction monodehydro-L-ascorbate radical(out) + L-ascorbate(in) = monodehydro-L-ascorbate radical(in) + L-ascorbate(out). Plasma membrane reductase that uses cytoplasmic ascorbate as an electron donor to reduce extracellular Fe(3+) into Fe(2+). It is also able to reduce extracellular monodehydro-L-ascorbate and may be involved in extracellular ascorbate regeneration. May also function as a cupric transmembrane reductase. The sequence is that of Plasma membrane ascorbate-dependent reductase CYBRD1 (cybrd1) from Xenopus laevis (African clawed frog).